A 176-amino-acid chain; its full sequence is Ribosome maturation factor RimM (176 aa).

In terms of domain architecture, PRC barrel spans 93–166 (ADEYYHADLI…QVVIEPPNEI (74 aa)).

The protein belongs to the RimM family. In terms of assembly, binds ribosomal protein uS19.

It is found in the cytoplasm. In terms of biological role, an accessory protein needed during the final step in the assembly of 30S ribosomal subunit, possibly for assembly of the head region. Essential for efficient processing of 16S rRNA. May be needed both before and after RbfA during the maturation of 16S rRNA. It has affinity for free ribosomal 30S subunits but not for 70S ribosomes. This chain is Ribosome maturation factor RimM, found in Rhodopseudomonas palustris (strain ATCC BAA-98 / CGA009).